The primary structure comprises 247 residues: NAD-dependent protein deacetylase (247 aa).

Residues 1–244 (MIYEKVAEEL…PKILENVRQK (244 aa)) form the Deacetylase sirtuin-type domain. Positions 22, 26, 33, 34, 98, 100, 101, and 116 each coordinate NAD(+). Phenylalanine 33 contributes to the nicotinamide binding site. Residues isoleucine 100 and aspartate 101 each coordinate nicotinamide. Residue histidine 116 is the Proton acceptor of the active site. Positions 124, 127, 149, and 151 each coordinate Zn(2+). NAD(+) is bound by residues serine 187, serine 188, asparagine 212, and valine 230.

Belongs to the sirtuin family. Class U subfamily. As to quaternary structure, monomer. The cofactor is Zn(2+).

The protein resides in the cytoplasm. It catalyses the reaction N(6)-acetyl-L-lysyl-[protein] + NAD(+) + H2O = 2''-O-acetyl-ADP-D-ribose + nicotinamide + L-lysyl-[protein]. Functionally, NAD-dependent protein deacetylase which modulates the activities of several enzymes which are inactive in their acetylated form. Deacetylates the N-terminal lysine residue of albA1, the major archaeal DNA compaction protein and that, in turn, increases albA1's DNA binding affinity, thereby repressing transcription. In Saccharolobus solfataricus (strain ATCC 35092 / DSM 1617 / JCM 11322 / P2) (Sulfolobus solfataricus), this protein is NAD-dependent protein deacetylase.